A 694-amino-acid chain; its full sequence is Elongation factor G (694 aa).

Residues 8–284 (EKLRNIGIVA…AVIDFLPSPV (277 aa)) form the tr-type G domain. Residues 17 to 24 (AHIDAGKT), 81 to 85 (DTPGH), and 135 to 138 (NKMD) each bind GTP.

Belongs to the TRAFAC class translation factor GTPase superfamily. Classic translation factor GTPase family. EF-G/EF-2 subfamily.

It is found in the cytoplasm. Catalyzes the GTP-dependent ribosomal translocation step during translation elongation. During this step, the ribosome changes from the pre-translocational (PRE) to the post-translocational (POST) state as the newly formed A-site-bound peptidyl-tRNA and P-site-bound deacylated tRNA move to the P and E sites, respectively. Catalyzes the coordinated movement of the two tRNA molecules, the mRNA and conformational changes in the ribosome. In Persephonella marina (strain DSM 14350 / EX-H1), this protein is Elongation factor G.